The chain runs to 1143 residues: Condensin-2 complex subunit G2 (1143 aa).

Serine 30 bears the Phosphoserine mark. Residues 460–498 form an HEAT repeat; it reads LLPALRYSLHDNSEKVRVAFVDMLLKIKAVRAAKFWKIC. Phosphothreonine is present on residues threonine 805 and threonine 1119.

Component of the condensin-2 complex, which contains the SMC2 and SMC4 heterodimer, and 3 non SMC subunits that probably regulate the complex: NCAPH2, NCAPD3 and NCAPG2.

The protein localises to the nucleus. In terms of biological role, regulatory subunit of the condensin-2 complex, a complex which establishes mitotic chromosome architecture and is involved in physical rigidity of the chromatid axis. In Homo sapiens (Human), this protein is Condensin-2 complex subunit G2 (NCAPG2).